The sequence spans 1342 residues: DNA-directed RNA polymerase subunit beta (1342 aa).

It belongs to the RNA polymerase beta chain family. The RNAP catalytic core consists of 2 alpha, 1 beta, 1 beta' and 1 omega subunit. When a sigma factor is associated with the core the holoenzyme is formed, which can initiate transcription.

The enzyme catalyses RNA(n) + a ribonucleoside 5'-triphosphate = RNA(n+1) + diphosphate. DNA-dependent RNA polymerase catalyzes the transcription of DNA into RNA using the four ribonucleoside triphosphates as substrates. The protein is DNA-directed RNA polymerase subunit beta of Aliivibrio fischeri (strain ATCC 700601 / ES114) (Vibrio fischeri).